Consider the following 327-residue polypeptide: Phenylalanine--tRNA ligase alpha subunit (327 aa).

Residue glutamate 252 participates in Mg(2+) binding.

Belongs to the class-II aminoacyl-tRNA synthetase family. Phe-tRNA synthetase alpha subunit type 1 subfamily. Tetramer of two alpha and two beta subunits. Mg(2+) is required as a cofactor.

Its subcellular location is the cytoplasm. The enzyme catalyses tRNA(Phe) + L-phenylalanine + ATP = L-phenylalanyl-tRNA(Phe) + AMP + diphosphate + H(+). This is Phenylalanine--tRNA ligase alpha subunit from Photobacterium profundum (strain SS9).